Reading from the N-terminus, the 612-residue chain is Adherence factor (612 aa).

Composition is skewed to low complexity over residues 1–18 (MSSFNSNSNPANAQNLSS), 47–68 (SSMMQQSQQGQPQSQTSQQQQQ), 94–106 (LQTQQPSSSSATT), 115–141 (YNQQQSQQQQQQQQQYQQMQPQPNNMQ), 182–203 (QSAQPISHSQPQPQPQATQPRS), and 218–228 (SRQVSGSGRST). Disordered stretches follow at residues 1–20 (MSSFNSNSNPANAQNLSSFQ), 46–68 (ASSMMQQSQQGQPQSQTSQQQQQ), 94–143 (LQTQ…MQFF), 179–273 (PQLQ…NNNK), 443–480 (KEKKLTEKTIEQREQQRKKRASANHSPPDSDSITNTNN), 497–527 (SQLMPNQNTGSGATKISSTTPPPPSQALSNN), and 546–612 (SQEQ…KQFY). Positions 230-240 (AKKQSAITSGS) are enriched in polar residues. Positions 254–272 (TSVANSTSTTTMTTTNNNN) are enriched in low complexity. A compositionally biased stretch (basic and acidic residues) spans 443–457 (KEKKLTEKTIEQREQ). Composition is skewed to polar residues over residues 465–480 (ANHSPPDSDSITNTNN) and 497–512 (SQLMPNQNTGSGATKI). The segment covering 555–571 (NQHHHNHQQHPLIHHHQ) has biased composition (basic residues). Low complexity predominate over residues 585 to 606 (PSTIPTSSLSIQQQQQQQQQQL).

In terms of biological role, surface antigen mediating adhesion and aggregation in S.cerevisiae. The chain is Adherence factor (ADF1) from Candida albicans (strain SC5314 / ATCC MYA-2876) (Yeast).